The chain runs to 171 residues: Adenine phosphoribosyltransferase (171 aa).

This sequence belongs to the purine/pyrimidine phosphoribosyltransferase family. In terms of assembly, homodimer.

The protein resides in the cytoplasm. It carries out the reaction AMP + diphosphate = 5-phospho-alpha-D-ribose 1-diphosphate + adenine. The protein operates within purine metabolism; AMP biosynthesis via salvage pathway; AMP from adenine: step 1/1. Its function is as follows. Catalyzes a salvage reaction resulting in the formation of AMP, that is energically less costly than de novo synthesis. This Halalkalibacterium halodurans (strain ATCC BAA-125 / DSM 18197 / FERM 7344 / JCM 9153 / C-125) (Bacillus halodurans) protein is Adenine phosphoribosyltransferase.